Reading from the N-terminus, the 414-residue chain is Dothistromin biosynthesis peroxidase dotB (414 aa).

An N-terminal signal peptide occupies residues 1-18 (MHFFSAIVLTCLASTAVA). Cys72 serves as a coordination point for heme. Residues Asn187, Asn241, and Asn328 are each glycosylated (N-linked (GlcNAc...) asparagine).

It belongs to the chloroperoxidase family. Requires heme b as cofactor.

It functions in the pathway mycotoxin biosynthesis. Functionally, peroxidase; part of the fragmented gene cluster that mediates the biosynthesis of dothistromin (DOTH), a polyketide toxin very similar in structure to the aflatoxin precursor, versicolorin B. The first step of the pathway is the conversion of acetate to norsolorinic acid (NOR) and requires the fatty acid synthase subunits hexA and hexB, as well as the polyketide synthase pksA. PksA combines a hexanoyl starter unit and 7 malonyl-CoA extender units to synthesize the precursor NOR. The hexanoyl starter unit is provided to the acyl-carrier protein (ACP) domain by the fungal fatty acid synthase hexA/hexB. The second step is the conversion of NOR to averantin (AVN) and requires the norsolorinic acid ketoreductase nor1, which catalyzes the dehydration of norsolorinic acid to form (1'S)-averantin. The cytochrome P450 monooxygenase avnA then catalyzes the hydroxylation of AVN to 5'hydroxyaverantin (HAVN). The next step is performed by adhA that transforms HAVN to averufin (AVF). Averufin might then be converted to hydroxyversicolorone by cypX and avfA. Hydroxyversicolorone is further converted versiconal hemiacetal acetate (VHA) by moxY. VHA is then the substrate for the versiconal hemiacetal acetate esterase est1 to yield versiconal (VAL). Versicolorin B synthase vbsA then converts VAL to versicolorin B (VERB) by closing the bisfuran ring. Then, the activity of the versicolorin B desaturase verB leads to versicolorin A (VERA). DotB, a predicted chloroperoxidase, may perform epoxidation of the A-ring of VERA. Alternatively, a cytochrome P450, such as cypX or avnA could catalyze this step. It is also possible that another, uncharacterized, cytochrome P450 enzyme is responsible for this step. Opening of the epoxide could potentially be achieved by the epoxide hydrolase epoA. However, epoA seems not to be required for DOTH biosynthesis, but other epoxide hydrolases may have the ability to complement this hydrolysis. Alternatively, opening of the epoxide ring could be achieved non-enzymatically. The next step is the deoxygenation of ring A to yield the 5,8-dihydroxyanthraquinone which is most likely catalyzed by the NADPH dehydrogenase encoded by ver1. The last stages of DOTH biosynthesis are proposed to involve hydroxylation of the bisfuran. OrdB and norB might have oxidative roles here. An alternative possibility is that cytochrome P450 monoogenases such as avnA and cypX might perform these steps in addition to previously proposed steps. This is Dothistromin biosynthesis peroxidase dotB from Dothistroma septosporum (Red band needle blight fungus).